Consider the following 390-residue polypeptide: Leu/Ile/Val-binding protein homolog 6 (390 aa).

Residues 1-21 (MKKIALTALAVFSLAASAAYA) form the signal peptide.

The protein belongs to the leucine-binding protein family.

Component of an amino-acid transport system. In Brucella suis biovar 1 (strain 1330), this protein is Leu/Ile/Val-binding protein homolog 6.